Consider the following 226-residue polypeptide: Phosphoribosyl-dephospho-CoA transferase (226 aa).

Residues aspartate 148 and aspartate 150 contribute to the active site.

The protein belongs to the MdcG family.

It carries out the reaction apo-[malonate decarboxylase ACP] + 2'-(5''-triphospho-alpha-D-ribosyl)-3'-dephospho-CoA = holo-[malonate decarboxylase ACP] + diphosphate. Transfers 2'-(5-triphosphoribosyl)-3'-dephosphocoenzyme-A to the apo-[acyl-carrier-protein] of the malonate decarboxylase to yield holo-[acyl-carrier-protein]. The sequence is that of Phosphoribosyl-dephospho-CoA transferase from Bradyrhizobium diazoefficiens (strain JCM 10833 / BCRC 13528 / IAM 13628 / NBRC 14792 / USDA 110).